Reading from the N-terminus, the 535-residue chain is Xylan 1,3-beta-xylosidase (535 aa).

Aspartate 16 (proton acceptor) is an active-site residue. The active-site Proton donor is the glutamate 189.

This sequence belongs to the glycosyl hydrolase 43 family.

It catalyses the reaction Hydrolysis of successive xylose residues from the non-reducing termini of (1-&gt;3)-beta-D-xylans.. Inhibited by Ag(+), Cu(2+), Hg(2+), Mn(2+), Pb(2+), Zn(2+) and p-chloromercuric benzoic acid. Beta-1,3-xylosidase that hydrolyzes beta-1,3-xylooligosaccharides to D-xylose. In Vibrio sp, this protein is Xylan 1,3-beta-xylosidase (xloA).